The chain runs to 220 residues: Ribosome maturation factor RimM (220 aa).

One can recognise a PRC barrel domain in the interval 143–220 (EGEFYWVDLI…RIVVDWGLDY (78 aa)).

This sequence belongs to the RimM family. Binds ribosomal protein uS19.

The protein localises to the cytoplasm. In terms of biological role, an accessory protein needed during the final step in the assembly of 30S ribosomal subunit, possibly for assembly of the head region. Essential for efficient processing of 16S rRNA. May be needed both before and after RbfA during the maturation of 16S rRNA. It has affinity for free ribosomal 30S subunits but not for 70S ribosomes. The polypeptide is Ribosome maturation factor RimM (Cupriavidus metallidurans (strain ATCC 43123 / DSM 2839 / NBRC 102507 / CH34) (Ralstonia metallidurans)).